The following is a 369-amino-acid chain: Peptide chain release factor 2 (369 aa).

Q251 bears the N5-methylglutamine mark.

This sequence belongs to the prokaryotic/mitochondrial release factor family. Methylated by PrmC. Methylation increases the termination efficiency of RF2.

It localises to the cytoplasm. Functionally, peptide chain release factor 2 directs the termination of translation in response to the peptide chain termination codons UGA and UAA. The polypeptide is Peptide chain release factor 2 (prfB) (Thermotoga maritima (strain ATCC 43589 / DSM 3109 / JCM 10099 / NBRC 100826 / MSB8)).